The sequence spans 89 residues: Small ribosomal subunit protein uS15 (89 aa).

It belongs to the universal ribosomal protein uS15 family. In terms of assembly, part of the 30S ribosomal subunit. Forms a bridge to the 50S subunit in the 70S ribosome, contacting the 23S rRNA.

In terms of biological role, one of the primary rRNA binding proteins, it binds directly to 16S rRNA where it helps nucleate assembly of the platform of the 30S subunit by binding and bridging several RNA helices of the 16S rRNA. Functionally, forms an intersubunit bridge (bridge B4) with the 23S rRNA of the 50S subunit in the ribosome. This chain is Small ribosomal subunit protein uS15, found in Chlorobaculum tepidum (strain ATCC 49652 / DSM 12025 / NBRC 103806 / TLS) (Chlorobium tepidum).